A 37-amino-acid polypeptide reads, in one-letter code: Large ribosomal subunit protein bL36 (37 aa).

Belongs to the bacterial ribosomal protein bL36 family.

This chain is Large ribosomal subunit protein bL36, found in Photobacterium profundum (strain SS9).